A 414-amino-acid chain; its full sequence is tRNA methyltransferase 10 homolog C (414 aa).

The transit peptide at 1–35 directs the protein to the mitochondrion; that stretch reads MNVTVRFLRPFARCLVPYTFHRKRSHLYSGVLQRY. Ser79 is subject to Phosphoserine. Residues 133–171 adopt a coiled-coil conformation; it reads GKEKAKKAKQVKKEMKAEAREEAKRARLLETTAEEQQQD. The region spanning 186–378 is the SAM-dependent MTase TRM10-type domain; that stretch reads LGWKGVQAMQ…KFVPRRKHTG (193 aa).

Belongs to the class IV-like SAM-binding methyltransferase superfamily. TRM10 family. In terms of assembly, component of mitochondrial ribonuclease P, a complex composed of TRMT10C/MRPP1, HSD17B10/MRPP2 and PRORP/MRPP3. Interacts with HSD17B10/MRPP2; forming the MRPP1-MRPP2 subcomplex of the mitochondrial ribonuclease P complex. Interacts with GRSF1.

It localises to the mitochondrion matrix. Its subcellular location is the mitochondrion nucleoid. It catalyses the reaction adenosine(9) in tRNA + S-adenosyl-L-methionine = N(1)-methyladenosine(9) in tRNA + S-adenosyl-L-homocysteine + H(+). The catalysed reaction is guanosine(9) in tRNA + S-adenosyl-L-methionine = N(1)-methylguanosine(9) in tRNA + S-adenosyl-L-homocysteine + H(+). It carries out the reaction an adenosine in mRNA + S-adenosyl-L-methionine = an N(1)-methyladenosine in mRNA + S-adenosyl-L-homocysteine + H(+). Its function is as follows. Mitochondrial tRNA N(1)-methyltransferase involved in mitochondrial tRNA maturation. Component of mitochondrial ribonuclease P, a complex composed of TRMT10C/MRPP1, HSD17B10/MRPP2 and PRORP/MRPP3, which cleaves tRNA molecules in their 5'-ends. Together with HSD17B10/MRPP2, forms a subcomplex of the mitochondrial ribonuclease P, named MRPP1-MRPP2 subcomplex, which displays functions that are independent of the ribonuclease P activity. The MRPP1-MRPP2 subcomplex catalyzes the formation of N(1)-methylguanine and N(1)-methyladenine at position 9 (m1G9 and m1A9, respectively) in tRNAs; TRMT10C/MRPP1 acting as the catalytic N(1)-methyltransferase subunit. The MRPP1-MRPP2 subcomplex also acts as a tRNA maturation platform: following 5'-end cleavage by the mitochondrial ribonuclease P complex, the MRPP1-MRPP2 subcomplex enhances the efficiency of 3'-processing catalyzed by ELAC2, retains the tRNA product after ELAC2 processing and presents the nascent tRNA to the mitochondrial CCA tRNA nucleotidyltransferase TRNT1 enzyme. In addition to tRNA N(1)-methyltransferase activity, TRMT10C/MRPP1 also acts as a mRNA N(1)-methyltransferase by mediating methylation of adenosine residues at the N(1) position of MT-ND5 mRNA. Associates with mitochondrial DNA complexes at the nucleoids to initiate RNA processing and ribosome assembly. The protein is tRNA methyltransferase 10 homolog C of Mus musculus (Mouse).